The following is a 77-amino-acid chain: U14-theraphotoxin-Cg1a 1 (77 aa).

Positions 1–21 (MKTSVLLVILGIAAITVQCTA) are cleaved as a signal peptide. Positions 22–49 (SESVEQDSLRTFVDAVLGWNAEMASEAR) are excised as a propeptide. Intrachain disulfides connect C50/C64, C57/C69, and C63/C75. K77 bears the Lysine amide mark.

Belongs to the neurotoxin 10 (Hwtx-1) family. 65 (Jztx-21) subfamily. In terms of tissue distribution, expressed by the venom gland.

Its subcellular location is the secreted. Its function is as follows. Probable ion channel inhibitor. This is U14-theraphotoxin-Cg1a 1 from Chilobrachys guangxiensis (Chinese earth tiger tarantula).